A 272-amino-acid polypeptide reads, in one-letter code: 2-dehydro-3-deoxyphosphooctonate aldolase (272 aa).

Belongs to the KdsA family.

The protein localises to the cytoplasm. It carries out the reaction D-arabinose 5-phosphate + phosphoenolpyruvate + H2O = 3-deoxy-alpha-D-manno-2-octulosonate-8-phosphate + phosphate. Its pathway is carbohydrate biosynthesis; 3-deoxy-D-manno-octulosonate biosynthesis; 3-deoxy-D-manno-octulosonate from D-ribulose 5-phosphate: step 2/3. The protein operates within bacterial outer membrane biogenesis; lipopolysaccharide biosynthesis. The protein is 2-dehydro-3-deoxyphosphooctonate aldolase of Geotalea uraniireducens (strain Rf4) (Geobacter uraniireducens).